Here is a 289-residue protein sequence, read N- to C-terminus: Iodotyrosine deiodinase 1 (289 aa).

Residues 1-21 (MYFLTPILVAILCILVVWIFK) traverse the membrane as a helical segment. Residues 29–58 (KKKGEPRTRAEARPWVDEDLKDSSDLHQAE) show a composition bias toward basic and acidic residues. A disordered region spans residues 29–69 (KKKGEPRTRAEARPWVDEDLKDSSDLHQAEEDADEWQESEE). The span at 59-69 (EDADEWQESEE) shows a compositional bias: acidic residues. Residues 100–104 (RRSVR), Ser128, and 128–129 (SG) each bind FMN. Residues Ala130, Glu157, Tyr161, and Lys182 each coordinate 3-iodo-L-tyrosine. Residues 237–239 (TTT) and Arg279 contribute to the FMN site.

Belongs to the nitroreductase family. As to quaternary structure, homodimer. The cofactor is FMN. As to expression, expressed at a high level in thyroid gland (at protein level). Expressed at a high level in thyroid gland and at lower level in kidney and trachea.

The protein localises to the cell membrane. It localises to the cytoplasmic vesicle membrane. The catalysed reaction is 2 iodide + L-tyrosine + 2 NADP(+) = 3,5-diiodo-L-tyrosine + 2 NADPH + H(+). The enzyme catalyses iodide + L-tyrosine + NADP(+) = 3-iodo-L-tyrosine + NADPH. It carries out the reaction 3-iodo-L-tyrosine + iodide + NADP(+) = 3,5-diiodo-L-tyrosine + NADPH + H(+). It catalyses the reaction L-tyrosine + chloride + NADP(+) = 3-chloro-L-tyrosine + NADPH. The catalysed reaction is bromide + L-tyrosine + NADP(+) = 3-bromo-L-tyrosine + NADPH. In terms of biological role, catalyzes the dehalogenation of halotyrosines such as 3-bromo-L-tyrosine, 3-chloro-L-tyrosine, 3-iodo-L-tyrosine and 3,5-diiodo-L-tyrosine. During thyroid hormone biosynthesis, facilitates iodide salvage by catalysing the oxidative NADPH-dependent deiodination of the halogenated by-products of thyroid hormone production, monoiodotyrosine (L-MIT) and diiodotyrosine (L-DIT). The scavanged iodide can then reenter the hormone-producing pathways. Acts more efficiently on 3-iodo-L-tyrosine than 3,5-diiodo-L-tyrosine. The chain is Iodotyrosine deiodinase 1 from Homo sapiens (Human).